A 371-amino-acid chain; its full sequence is Aspartate-semialdehyde dehydrogenase (371 aa).

NADP(+) contacts are provided by residues 11–14 (RGMV), 38–39 (TS), and Q75. R104 is a phosphate binding site. C137 functions as the Acyl-thioester intermediate in the catalytic mechanism. Residue Q164 coordinates substrate. 167–168 (SG) provides a ligand contact to NADP(+). E243 contacts substrate. K246 contributes to the phosphate binding site. Position 269 (R269) interacts with substrate. The active-site Proton acceptor is the H276. Q352 is an NADP(+) binding site.

It belongs to the aspartate-semialdehyde dehydrogenase family. Homodimer.

It catalyses the reaction L-aspartate 4-semialdehyde + phosphate + NADP(+) = 4-phospho-L-aspartate + NADPH + H(+). Its pathway is amino-acid biosynthesis; L-lysine biosynthesis via DAP pathway; (S)-tetrahydrodipicolinate from L-aspartate: step 2/4. The protein operates within amino-acid biosynthesis; L-methionine biosynthesis via de novo pathway; L-homoserine from L-aspartate: step 2/3. It participates in amino-acid biosynthesis; L-threonine biosynthesis; L-threonine from L-aspartate: step 2/5. Catalyzes the NADPH-dependent formation of L-aspartate-semialdehyde (L-ASA) by the reductive dephosphorylation of L-aspartyl-4-phosphate. The polypeptide is Aspartate-semialdehyde dehydrogenase (Buchnera aphidicola subsp. Schizaphis graminum (strain Sg)).